A 202-amino-acid chain; its full sequence is LexA repressor (202 aa).

Positions 28-48 form a DNA-binding region, H-T-H motif; that stretch reads QQEIARAFGFRSLGTVRNYLV. Active-site for autocatalytic cleavage activity residues include Ser120 and Lys157.

The protein belongs to the peptidase S24 family. Homodimer.

It carries out the reaction Hydrolysis of Ala-|-Gly bond in repressor LexA.. Its function is as follows. Represses a number of genes involved in the response to DNA damage (SOS response), including recA and lexA. In the presence of single-stranded DNA, RecA interacts with LexA causing an autocatalytic cleavage which disrupts the DNA-binding part of LexA, leading to derepression of the SOS regulon and eventually DNA repair. The protein is LexA repressor of Syntrophotalea carbinolica (strain DSM 2380 / NBRC 103641 / GraBd1) (Pelobacter carbinolicus).